Here is a 474-residue protein sequence, read N- to C-terminus: Gasdermin-C (474 aa).

The triggers pyroptosis stretch occupies residues 1–237 (MLYTFDQVSK…TCAILLSANA (237 aa)).

This sequence belongs to the gasdermin family. In terms of assembly, homooligomer; homooligomeric ring-shaped pore complex containing 27-28 subunits when inserted in the membrane. Post-translationally, cleavage by CASP8 relieves autoinhibition by releasing the N-terminal moiety (Gasdermin-C, N-terminal) that initiates pyroptosis. Palmitoylated.

It is found in the cytoplasm. The protein localises to the cytosol. Its subcellular location is the cell membrane. Its activity is regulated as follows. The full-length protein before cleavage is inactive: intramolecular interactions between N- and C-terminal domains mediate autoinhibition in the absence of activation signal. The intrinsic pyroptosis-inducing activity is carried by the released N-terminal moiety (Gasdermin-C, N-terminal) following cleavage by caspase CASP8. In terms of biological role, this form constitutes the precursor of the pore-forming protein: upon cleavage, the released N-terminal moiety (Gasdermin-C, N-terminal) binds to membranes and forms pores, triggering pyroptosis. Functionally, pore-forming protein that causes membrane permeabilization and pyroptosis. Produced by the cleavage of gasdermin-C by caspase CASP8 in response to death signals. After cleavage, moves to the plasma membrane where it strongly binds to membrane inner leaflet lipids. Homooligomerizes within the membrane and forms pores of 10-15 nanometers (nm) of inner diameter, triggering pyroptosis. The sequence is that of Gasdermin-C from Rattus norvegicus (Rat).